Reading from the N-terminus, the 339-residue chain is Methylcobamide:CoM methyltransferase MtaA (339 aa).

Positions 237, 239, and 316 each coordinate Zn(2+).

It belongs to the uroporphyrinogen decarboxylase family. MtbA/mtaA subfamily. It depends on Zn(2+) as a cofactor.

The enzyme catalyses methyl-Co(III)-[methanol-specific corrinoid protein] + coenzyme M = Co(I)-[methanol-specific corrinoid protein] + methyl-coenzyme M + H(+). Its function is as follows. Methyltransferase involved in methanogenesis in the methanol pathway. Catalyzes the transfer of the methyl group from the methylated corrinoid protein MtaC to coenzyme M, forming the substrate for coenzyme-B sulfoethylthiotransferase. MtaC can be substituted by free cob(I)alamin in vitro. This chain is Methylcobamide:CoM methyltransferase MtaA (mtaA), found in Methanosarcina barkeri (strain Fusaro / DSM 804).